The chain runs to 247 residues: Probable transcriptional regulatory protein MS0710 (247 aa).

This sequence belongs to the TACO1 family.

It localises to the cytoplasm. This Mannheimia succiniciproducens (strain KCTC 0769BP / MBEL55E) protein is Probable transcriptional regulatory protein MS0710.